The chain runs to 392 residues: Putative pectate lyase 21 (392 aa).

An N-terminal signal peptide occupies residues 1 to 21 (MSIVCTFFLFLLNTSFAFAFA). N-linked (GlcNAc...) asparagine glycosylation occurs at Asn38. Asp189, Asp213, and Asp217 together coordinate Ca(2+). Asn220 carries N-linked (GlcNAc...) asparagine glycosylation. The active site involves Arg269.

This sequence belongs to the polysaccharide lyase 1 family. Ca(2+) serves as cofactor.

It carries out the reaction Eliminative cleavage of (1-&gt;4)-alpha-D-galacturonan to give oligosaccharides with 4-deoxy-alpha-D-galact-4-enuronosyl groups at their non-reducing ends.. Its pathway is glycan metabolism; pectin degradation; 2-dehydro-3-deoxy-D-gluconate from pectin: step 2/5. This chain is Putative pectate lyase 21, found in Arabidopsis thaliana (Mouse-ear cress).